Here is a 91-residue protein sequence, read N- to C-terminus: CRISPR-associated endoribonuclease Cas2 (91 aa).

D14 contacts Mg(2+).

It belongs to the CRISPR-associated endoribonuclease Cas2 protein family. In terms of assembly, homodimer, forms a heterotetramer with a Cas1 homodimer. Requires Mg(2+) as cofactor.

CRISPR (clustered regularly interspaced short palindromic repeat), is an adaptive immune system that provides protection against mobile genetic elements (viruses, transposable elements and conjugative plasmids). CRISPR clusters contain sequences complementary to antecedent mobile elements and target invading nucleic acids. CRISPR clusters are transcribed and processed into CRISPR RNA (crRNA). Functions as a ssRNA-specific endoribonuclease. Involved in the integration of spacer DNA into the CRISPR cassette. The chain is CRISPR-associated endoribonuclease Cas2 from Nanoarchaeum equitans (strain Kin4-M).